We begin with the raw amino-acid sequence, 505 residues long: ATP synthase subunit alpha (505 aa).

Position 170-177 (170-177 (GDRQTGKT)) interacts with ATP.

This sequence belongs to the ATPase alpha/beta chains family. F-type ATPases have 2 components, CF(1) - the catalytic core - and CF(0) - the membrane proton channel. CF(1) has five subunits: alpha(3), beta(3), gamma(1), delta(1), epsilon(1). CF(0) has four main subunits: a(1), b(1), b'(1) and c(9-12).

It localises to the cellular thylakoid membrane. It catalyses the reaction ATP + H2O + 4 H(+)(in) = ADP + phosphate + 5 H(+)(out). Functionally, produces ATP from ADP in the presence of a proton gradient across the membrane. The alpha chain is a regulatory subunit. This is ATP synthase subunit alpha from Trichodesmium erythraeum (strain IMS101).